We begin with the raw amino-acid sequence, 202 residues long: Imidazoleglycerol-phosphate dehydratase (202 aa).

This sequence belongs to the imidazoleglycerol-phosphate dehydratase family.

Its subcellular location is the cytoplasm. It catalyses the reaction D-erythro-1-(imidazol-4-yl)glycerol 3-phosphate = 3-(imidazol-4-yl)-2-oxopropyl phosphate + H2O. It functions in the pathway amino-acid biosynthesis; L-histidine biosynthesis; L-histidine from 5-phospho-alpha-D-ribose 1-diphosphate: step 6/9. This is Imidazoleglycerol-phosphate dehydratase from Brucella anthropi (strain ATCC 49188 / DSM 6882 / CCUG 24695 / JCM 21032 / LMG 3331 / NBRC 15819 / NCTC 12168 / Alc 37) (Ochrobactrum anthropi).